Consider the following 395-residue polypeptide: Argininosuccinate synthase (395 aa).

Residues 10–18 (AYSGGLDTS) and A37 each bind ATP. The L-citrulline site is built by Y88 and S93. G118 is a binding site for ATP. T120, N124, and D125 together coordinate L-aspartate. N124 lines the L-citrulline pocket. R128, S179, S188, E264, and Y276 together coordinate L-citrulline.

Belongs to the argininosuccinate synthase family. Type 1 subfamily. Homotetramer.

It is found in the cytoplasm. The catalysed reaction is L-citrulline + L-aspartate + ATP = 2-(N(omega)-L-arginino)succinate + AMP + diphosphate + H(+). It participates in amino-acid biosynthesis; L-arginine biosynthesis; L-arginine from L-ornithine and carbamoyl phosphate: step 2/3. The sequence is that of Argininosuccinate synthase from Pelagibacter ubique (strain HTCC1062).